The sequence spans 550 residues: Chaperonin GroEL (550 aa).

Residues 30–33 (TLGP), Lys-51, 87–91 (DGTTT), Gly-415, and Asp-495 contribute to the ATP site.

This sequence belongs to the chaperonin (HSP60) family. In terms of assembly, forms a cylinder of 14 subunits composed of two heptameric rings stacked back-to-back. Interacts with the co-chaperonin GroES.

The protein localises to the cytoplasm. It carries out the reaction ATP + H2O + a folded polypeptide = ADP + phosphate + an unfolded polypeptide.. Its function is as follows. Together with its co-chaperonin GroES, plays an essential role in assisting protein folding. The GroEL-GroES system forms a nano-cage that allows encapsulation of the non-native substrate proteins and provides a physical environment optimized to promote and accelerate protein folding. The protein is Chaperonin GroEL of Dechloromonas aromatica (strain RCB).